Reading from the N-terminus, the 106-residue chain is UPF0060 membrane protein Smed_0659 (106 aa).

A run of 3 helical transmembrane segments spans residues 4 to 24 (FAIY…FWAW), 31 to 51 (GLWL…LTMV), and 61 to 81 (AAYG…AEGA).

Belongs to the UPF0060 family.

The protein resides in the cell inner membrane. The sequence is that of UPF0060 membrane protein Smed_0659 from Sinorhizobium medicae (strain WSM419) (Ensifer medicae).